We begin with the raw amino-acid sequence, 376 residues long: Histidinol-phosphate aminotransferase (376 aa).

Residues 1–21 (MQPRDLSAHEPYVPGRGTKEV) are disordered. Lys-222 carries the post-translational modification N6-(pyridoxal phosphate)lysine.

Belongs to the class-II pyridoxal-phosphate-dependent aminotransferase family. Histidinol-phosphate aminotransferase subfamily. The cofactor is pyridoxal 5'-phosphate.

The enzyme catalyses L-histidinol phosphate + 2-oxoglutarate = 3-(imidazol-4-yl)-2-oxopropyl phosphate + L-glutamate. The protein operates within amino-acid biosynthesis; L-histidine biosynthesis; L-histidine from 5-phospho-alpha-D-ribose 1-diphosphate: step 7/9. The protein is Histidinol-phosphate aminotransferase of Haloquadratum walsbyi (strain DSM 16790 / HBSQ001).